Consider the following 362-residue polypeptide: Heat-inducible transcription repressor HrcA (362 aa).

It belongs to the HrcA family.

Functionally, negative regulator of class I heat shock genes (grpE-dnaK-dnaJ and groELS operons). Prevents heat-shock induction of these operons. The chain is Heat-inducible transcription repressor HrcA from Rhizobium leguminosarum bv. trifolii (strain WSM2304).